The primary structure comprises 389 residues: Succinyl-diaminopimelate desuccinylase (389 aa).

His72 is a Zn(2+) binding site. Residue Asp74 is part of the active site. Asp105 provides a ligand contact to Zn(2+). The active-site Proton acceptor is the Glu144. Residues Glu145, Glu173, and His362 each contribute to the Zn(2+) site.

Belongs to the peptidase M20A family. DapE subfamily. In terms of assembly, homodimer. The cofactor is Zn(2+). It depends on Co(2+) as a cofactor.

It carries out the reaction N-succinyl-(2S,6S)-2,6-diaminopimelate + H2O = (2S,6S)-2,6-diaminopimelate + succinate. Its pathway is amino-acid biosynthesis; L-lysine biosynthesis via DAP pathway; LL-2,6-diaminopimelate from (S)-tetrahydrodipicolinate (succinylase route): step 3/3. Functionally, catalyzes the hydrolysis of N-succinyl-L,L-diaminopimelic acid (SDAP), forming succinate and LL-2,6-diaminopimelate (DAP), an intermediate involved in the bacterial biosynthesis of lysine and meso-diaminopimelic acid, an essential component of bacterial cell walls. The sequence is that of Succinyl-diaminopimelate desuccinylase from Rhodopseudomonas palustris (strain HaA2).